A 1565-amino-acid chain; its full sequence is Major cell-surface adhesin PAc (1565 aa).

Residues 1–38 form the signal peptide; that stretch reads MKVKKTYGFRKSKISKTLCGAVLGTVAAVSVAGQKVFA. Over residues 42–54 the composition is skewed to low complexity; that stretch reads TTTSDVDTKVVGT. Residues 42 to 81 form a disordered region; the sequence is TTTSDVDTKVVGTQTGNPATNLPEAQGSASKEAEQSQTKL. A compositionally biased stretch (basic and acidic residues) spans 72–81; the sequence is KEAEQSQTKL. Ag I/II A repeat units follow at residues 146-220, 221-302, 303-384, and 385-466; these read KKTT…QKTN, AANQ…QEAN, AANE…KKAN, and AANE…QKDL. The tract at residues 203 to 448 is heptad repeats of Y-[EQ]-X-X-L-A-X; sequence EAKLAQYQAD…KRNADAKADY (246 aa). Positions 461-834 are V-region (lectin-like); it reads KYQKDLADYP…VNVPKVTKEK (374 aa). Disordered regions lie at residues 827–985 and 1486–1511; these read VPKV…PTPP and NTVKTTTPEDPADPTDPQDPSSPRTS. A P1 repeat occupies 848–887; the sequence is TYETEKPLKPAPVAPNYEKEPTPPTRTPDQAEPNKPTPPT. Residues 888–926 form a P2 repeat; the sequence is YETEKPLEPAPVEPSYEAEPTPPTRTPDQAEPNKPTPPT. One copy of the P3 repeat lies at 927-964; the sequence is YETEKPLEPAPVEPSYEAEPTPPTPTPDQPEPNKPVEP. The span at 946-961 shows a compositional bias: pro residues; the sequence is PTPPTPTPDQPEPNKP. The LPXTG sorting signal signature appears at 1532-1536; sequence LPNTG. T1535 carries the pentaglycyl murein peptidoglycan amidated threonine modification. A propeptide spans 1536 to 1565 (removed by sortase); it reads GVTNNAYMPLLGIIGLVTSFSLLGLKAKKD.

This sequence belongs to the antigen I/II family.

The protein resides in the secreted. Its subcellular location is the cell wall. Surface protein antigen implicated in dental caries. The protein is Major cell-surface adhesin PAc of Streptococcus mutans.